We begin with the raw amino-acid sequence, 245 residues long: 2,3-bisphosphoglycerate-dependent phosphoglycerate mutase (245 aa).

Residues 8 to 15 (RHGQSLWN), 21 to 22 (TG), arginine 60, 87 to 90 (ERHY), lysine 98, 114 to 115 (RR), and 183 to 184 (GN) contribute to the substrate site. Histidine 9 (tele-phosphohistidine intermediate) is an active-site residue. Residue glutamate 87 is the Proton donor/acceptor of the active site.

Belongs to the phosphoglycerate mutase family. BPG-dependent PGAM subfamily.

The catalysed reaction is (2R)-2-phosphoglycerate = (2R)-3-phosphoglycerate. It participates in carbohydrate degradation; glycolysis; pyruvate from D-glyceraldehyde 3-phosphate: step 3/5. Its function is as follows. Catalyzes the interconversion of 2-phosphoglycerate and 3-phosphoglycerate. The chain is 2,3-bisphosphoglycerate-dependent phosphoglycerate mutase from Bacillus thuringiensis (strain Al Hakam).